The sequence spans 488 residues: GTPase Der (488 aa).

EngA-type G domains are found at residues Pro3–Met166 and Ile199–Thr372. GTP contacts are provided by residues Gly9–Ser16, Asp56–Ile60, Asn118–Asp121, Gly205–Ser212, Asp252–Val256, and Asn317–Asp320. A KH-like domain is found at Arg373–Asp457. Residues Phe460–Lys488 are disordered. Positions Arg473–Lys488 are enriched in basic residues.

The protein belongs to the TRAFAC class TrmE-Era-EngA-EngB-Septin-like GTPase superfamily. EngA (Der) GTPase family. As to quaternary structure, associates with the 50S ribosomal subunit.

Its function is as follows. GTPase that plays an essential role in the late steps of ribosome biogenesis. The sequence is that of GTPase Der from Shewanella baltica (strain OS223).